We begin with the raw amino-acid sequence, 23 residues long: Superoxide dismutase [Mn], mitochondrial (23 aa).

The protein belongs to the iron/manganese superoxide dismutase family. In terms of assembly, homotetramer. Mn(2+) serves as cofactor.

It localises to the mitochondrion matrix. The catalysed reaction is 2 superoxide + 2 H(+) = H2O2 + O2. Functionally, destroys superoxide anion radicals which are normally produced within the cells and which are toxic to biological systems. This Aquarana catesbeiana (American bullfrog) protein is Superoxide dismutase [Mn], mitochondrial.